Reading from the N-terminus, the 322-residue chain is 3-hydroxyacyl-CoA dehydrogenase FVEG_12628 (322 aa).

A helical membrane pass occupies residues 5–25 (IRTVAIVGCGVIGMGWAVLFL). Glutamate 151 serves as the catalytic For hydroxyacyl-coenzyme A dehydrogenase activity.

It belongs to the 3-hydroxyacyl-CoA dehydrogenase family.

Its subcellular location is the membrane. In terms of biological role, 3-hydroxyacyl-CoA dehydrogenase; part of the Fusarium detoxification of benzoxazolinone cluster 2 (FDB2) involved in the degradation of benzoxazolinones produced by the host plant. Maize, wheat, and rye produce the 2 benzoxazinone phytoanticipins 2,4-dihy-droxy-7-methoxy-1,4-benzoxazin-3-one (DIMBOA) and 2,4-dihydroxy-1,4-benzoxazin-3-one (DIBOA) that, due to their inherent instability once released, spontaneously degrade to the more stable corresponding benzoxazolinones, 6-methoxy-2-benzoxazolinone (MBOA) and 2-benzoxazolinone (BOA), respectively. The first step in the detoxification of benzoxazolinones involves the hydrolysis of the cyclic ester bond of benzoxazolinones by the FDB1 cluster gamma-lactamase MBL1 to aminophenols. MBL1 is able to convert BOA into 2-aminophenol (2-AP), as well as MBOA into 5-methoxy-2-aminophenol (2-AMP). The FDB2 cluster N-malonyltransferase FDB2/NAT1 then metabolizes aminophenols via N-malonylation to non-toxic malonamic acids. FDB2/NAT1 converts 2-AP into N-(2-hydroxyphenyl) malonamic acid (HPMA) and 2-AMP into N-(2-hydroxy-4-methoxyphenyl) malonamic acid (HMPMA). The duplicated dienlactone hydrolases DLH1 and DLH2 may provide redundant function for hydrolyzing the lactone moiety in the BOA molecule. The roles of the amidases an other enzymes encoded by the 2 FDB clusters have not been identified so far. The protein is 3-hydroxyacyl-CoA dehydrogenase FVEG_12628 of Gibberella moniliformis (strain M3125 / FGSC 7600) (Maize ear and stalk rot fungus).